Reading from the N-terminus, the 168-residue chain is G/U mismatch-specific DNA glycosylase (168 aa).

This sequence belongs to the uracil-DNA glycosylase (UDG) superfamily. TDG/mug family. Binds DNA as a monomer.

The protein resides in the cytoplasm. It carries out the reaction Specifically hydrolyzes mismatched double-stranded DNA and polynucleotides, releasing free uracil.. Excises ethenocytosine and uracil, which can arise by alkylation or deamination of cytosine, respectively, from the corresponding mispairs with guanine in ds-DNA. It is capable of hydrolyzing the carbon-nitrogen bond between the sugar-phosphate backbone of the DNA and the mispaired base. The complementary strand guanine functions in substrate recognition. Required for DNA damage lesion repair in stationary-phase cells. This chain is G/U mismatch-specific DNA glycosylase, found in Salmonella dublin (strain CT_02021853).